The primary structure comprises 251 residues: UPF0309 protein SCO4393 (251 aa).

In terms of domain architecture, SIS spans 36–220; sequence LADTVQNGGR…AATLADRGIE (185 aa).

The protein belongs to the UPF0309 family.

The polypeptide is UPF0309 protein SCO4393 (Streptomyces coelicolor (strain ATCC BAA-471 / A3(2) / M145)).